The primary structure comprises 616 residues: D-glucuronyl C5-epimerase (616 aa).

The Cytoplasmic segment spans residues 1–12; it reads MKCLRWRSNRHR. Residues 13-29 form a helical; Signal-anchor for type II membrane protein membrane-spanning segment; it reads IYLLVACGALFLLNRHL. Residues 30-616 are Extracellular-facing; that stretch reads TQEESRIDEE…YAYGKRAKHN (587 aa). Residues Tyr-136, 141 to 143, and Gln-169 each bind substrate; that span reads RDR. N-linked (GlcNAc...) asparagine glycans are attached at residues Asn-188, Asn-232, Asn-267, and Asn-471. Substrate contacts are provided by residues Tyr-504, Arg-562, and 574 to 580; that span reads RWDYHAV.

Belongs to the D-glucuronyl C5-epimerase family. In terms of assembly, homodimer. As to expression, expression in comma stage embryos is strong in the hypodermis and intestine and weaker in the head region. In late embryos, larval, and adult stages, expressed primarily in hypodermis and intestine.

Its subcellular location is the cell membrane. It is found in the secreted. The protein localises to the extracellular space. It localises to the extracellular matrix. The protein resides in the basement membrane. The enzyme catalyses [heparosan-N-sulfate](n) = [heparan-N-sulfate](n). It participates in glycan metabolism; heparan sulfate biosynthesis. Its pathway is glycan metabolism; heparin biosynthesis. Converts D-glucuronic acid residues adjacent to N-sulfate sugar residues to L-iduronic acids. Plays a role in the early migration of AQR and PQR neurons, which descend from the Q neuroblasts. This Caenorhabditis elegans protein is D-glucuronyl C5-epimerase (hse-5).